The following is a 42-amino-acid chain: Capsid protein G8P (42 aa).

Topologically, residues 1-12 (MGDILTGVSGAE) are periplasmic. Residues 13–34 (AATAMIAAAAIIALVGFTKWGA) form a helical membrane-spanning segment. Topologically, residues 35–42 (KKVASFFG) are cytoplasmic.

This sequence belongs to the inovirus capsid protein family. As to quaternary structure, homomultimerizes. There are several thousands of this protein in the phage capsid.

The protein resides in the virion. The protein localises to the host membrane. In terms of biological role, self assembles to form a helical capsid wrapping up the viral genomic DNA. The capsid displays a filamentous structure with a length of 760-1950 nm and a width of 6-8 nm. The virion assembly and budding take place at the host inner membrane. The chain is Capsid protein G8P (VIII) from Xanthomonas phage phiLf (Bacteriophage phi-Lf).